Here is a 247-residue protein sequence, read N- to C-terminus: tRNA pseudouridine synthase A (247 aa).

Residue Asp-53 is the Nucleophile of the active site. Tyr-111 is a substrate binding site.

This sequence belongs to the tRNA pseudouridine synthase TruA family. As to quaternary structure, homodimer.

The catalysed reaction is uridine(38/39/40) in tRNA = pseudouridine(38/39/40) in tRNA. Functionally, formation of pseudouridine at positions 38, 39 and 40 in the anticodon stem and loop of transfer RNAs. This chain is tRNA pseudouridine synthase A, found in Bacillus pumilus (strain SAFR-032).